A 526-amino-acid chain; its full sequence is Choline/ethanolamine transporter FLVCR2 (526 aa).

The disordered stretch occupies residues 1-70; it reads MVNEGPNQEE…PSGLAHPSSS (70 aa). Residues 1–76 lie on the Cytoplasmic side of the membrane; the sequence is MVNEGPNQEE…PSSSGPEDLS (76 aa). 1-84 lines the heme b pocket; it reads MVNEGPNQEE…LSVIKVSRRR (84 aa). 5 repeat units span residues 25–30, 31–36, 37–42, 43–48, and 49–54. A compositionally biased stretch (low complexity) spans 25-56; sequence PSVSVHPSVSVHPSVSINPSVSVHPSSSAHPS. Residues 25–72 form an 8 X 6 AA tandem repeats of P-S-[VS]-S-[VIAG]-[HNP] region; it reads PSVSVHPSVSVHPSVSINPSVSVHPSSSAHPSALAQPSGLAHPSSSGP. Residues 55–60 form a 6; approximate repeat; that stretch reads PSALAQ. The stretch at 61-66 is one 7; approximate repeat; it reads PSGLAH. Repeat unit 8 spans residues 67–72; that stretch reads PSSSGP. Residues 77–101 form a helical membrane-spanning segment; that stretch reads VIKVSRRRWAVVLVFSCYSMCNSFQ. Asn98 and Trp102 together coordinate choline. The Extracellular segment spans residues 102–119; it reads WIQYGSINNIFMHFYGVS. Residues 120–147 traverse the membrane as a helical segment; the sequence is AFAIDWLSMCYMLTYIPLLLPVAWLLEK. Topologically, residues 148 to 149 are cytoplasmic; that stretch reads FG. Residues 150–169 traverse the membrane as a helical segment; the sequence is LRTIALTGSALNCLGAWVKL. Residues 170 to 176 lie on the Extracellular side of the membrane; the sequence is GSLKPHL. Residues 177–205 form a helical membrane-spanning segment; that stretch reads FPVTVVGQLICSVAQVFILGMPSRIASVW. Choline-binding residues include Gln191 and Leu195. At 206–210 the chain is on the cytoplasmic side; it reads FGANE. A helical transmembrane segment spans residues 211–236; sequence VSTACSVAVFGNQLGIAIGFLVPPVL. Residues 237 to 241 lie on the Extracellular side of the membrane; the sequence is VPNIE. The chain crosses the membrane as a helical span at residues 242-271; that stretch reads DRDELAYHISIMFYIIGGVATLLLILVIIV. The Cytoplasmic segment spans residues 272 to 307; it reads FKEKPKYPPSRAQSLSYALTSPDASYLGSIARLFKN. Residues 308–338 traverse the membrane as a helical segment; it reads LNFVLLVITYGLNAGAFYALSTLLNRMVIWH. Position 325 (Tyr325) interacts with choline. The Extracellular segment spans residues 339 to 342; that stretch reads YPGE. Residues 343-371 form a helical membrane-spanning segment; sequence EVNAGRIGLTIVIAGMLGAVISGIWLDRS. Residues 372–373 lie on the Cytoplasmic side of the membrane; the sequence is KT. Residues 374–396 form a helical membrane-spanning segment; it reads YKETTLVVYIMTLVGMVVYTFTL. Residues 397–399 are Extracellular-facing; sequence NLG. A helical transmembrane segment spans residues 400–429; the sequence is HLWVVFITAGTMGFFMTGYLPLGFEFAVEL. Residues 430–437 lie on the Cytoplasmic side of the membrane; it reads TYPESEGI. A helical membrane pass occupies residues 438–463; sequence SSGLLNISAQVFGIIFTISQGQIIDN. Choline is bound at residue Gln447. Residues 464-465 lie on the Extracellular side of the membrane; that stretch reads YG. Residues 466–488 form a helical membrane-spanning segment; it reads TKPGNIFLCVFLTLGAALTAFIK. At 489–526 the chain is on the cytoplasmic side; it reads ADLRRQKANKETLENKLQEEEEESNTSKVPTAVSEDHL. The disordered stretch occupies residues 500–526; that stretch reads TLENKLQEEEEESNTSKVPTAVSEDHL. Ser515 bears the Phosphoserine mark.

This sequence belongs to the major facilitator superfamily. Feline leukemia virus subgroup C receptor (TC 2.A.1.28.1) family. As to quaternary structure, interacts with components of electron transfer chain complexes III, IV and V including CYC1, NDUFA4, COX4I1, ATP5PD and ATP5F1C; these interactions occur in the absence of heme and are disrupted upon heme binding. Interacts with ATP2A2; this interaction occurs in the absence of heme and promotes ATP2A2 proteasomal degradation; the complex is dissociated upon heme binding. Interacts with HMOX1; this interaction is potentiated in the presence of heme. Expressed in non-hematopoietic tissues, with relative abundant expression in brain, placenta, lung, liver and kidney. Also expressed in hematopoietic tissues (fetal liver, spleen, lymph node, thymus, leukocytes and bone marrow). Found in acidophil cells of the pituitary that secrete growth hormone and prolactin (at protein level).

The protein localises to the cell membrane. It is found in the mitochondrion membrane. The protein resides in the endoplasmic reticulum membrane. It carries out the reaction choline(out) = choline(in). The enzyme catalyses ethanolamine(in) = ethanolamine(out). The catalysed reaction is heme b(in) = heme b(out). Choline uniporter that specifically mediates choline uptake at the blood-brain-barrier. Responsible for the majority of choline uptake across the blood-brain-barrier from the circulation into the brain. Choline, a nutrient critical for brain development, is a precursor of phosphatidylcholine, as well as betaine. Also mediates transport of ethanolamine. Choline and ethanolamine transport is not coupled with proton transport and is exclusively driven by the choline gradient across the plasma membrane. However, the presence of an inwardly directed proton gradient enhances choline uptake. Also acts as a heme b transporter. Required to regulate mitochondrial respiration processes, ATP synthesis and thermogenesis. At low heme levels, interacts with components of electron transfer chain (ETC) complexes and ATP2A2, leading to ubiquitin-mediated degradation of ATP2A2 and inhibition of thermogenesis. Upon heme binding, dissociates from ETC complexes to allow switching from mitochondrial ATP synthesis to thermogenesis. This is Choline/ethanolamine transporter FLVCR2 from Homo sapiens (Human).